The primary structure comprises 596 residues: Fructan 1-exohydrolase (596 aa).

Positions 1 to 20 (MAQAWAFLLPVLVLGSYVTS) are cleaved as a signal peptide. Aspartate 75 is an active-site residue. 3 N-linked (GlcNAc...) asparagine glycosylation sites follow: asparagine 168, asparagine 236, and asparagine 248. Cysteine 446 and cysteine 492 are joined by a disulfide. Asparagine 567 carries N-linked (GlcNAc...) asparagine glycosylation.

It belongs to the glycosyl hydrolase 32 family.

The enzyme catalyses Hydrolysis of terminal, non-reducing (2-&gt;1)-linked beta-D-fructofuranose residues in fructans.. Its activity is regulated as follows. Inhibited by sucrose. Its function is as follows. Hydrolyzes inulin-type beta-(2,1)-fructans. May play a role as a beta-(2,1)-trimmer during graminan biosynthesis. This chain is Fructan 1-exohydrolase, found in Aegilops tauschii (Tausch's goatgrass).